A 476-amino-acid chain; its full sequence is Bifunctional protein HldE (476 aa).

Positions 1–318 (MAQYSAEFKQ…ENAIHARPET (318 aa)) are ribokinase. 195–198 (NMSE) contributes to the ATP binding site. D264 is an active-site residue. The segment at 344-476 (MTNGCFDILH…VIEKIKLLKD (133 aa)) is cytidylyltransferase.

It in the N-terminal section; belongs to the carbohydrate kinase PfkB family. In the C-terminal section; belongs to the cytidylyltransferase family. Homodimer.

The catalysed reaction is D-glycero-beta-D-manno-heptose 7-phosphate + ATP = D-glycero-beta-D-manno-heptose 1,7-bisphosphate + ADP + H(+). It carries out the reaction D-glycero-beta-D-manno-heptose 1-phosphate + ATP + H(+) = ADP-D-glycero-beta-D-manno-heptose + diphosphate. Its pathway is nucleotide-sugar biosynthesis; ADP-L-glycero-beta-D-manno-heptose biosynthesis; ADP-L-glycero-beta-D-manno-heptose from D-glycero-beta-D-manno-heptose 7-phosphate: step 1/4. It functions in the pathway nucleotide-sugar biosynthesis; ADP-L-glycero-beta-D-manno-heptose biosynthesis; ADP-L-glycero-beta-D-manno-heptose from D-glycero-beta-D-manno-heptose 7-phosphate: step 3/4. Functionally, catalyzes the phosphorylation of D-glycero-D-manno-heptose 7-phosphate at the C-1 position to selectively form D-glycero-beta-D-manno-heptose-1,7-bisphosphate. Catalyzes the ADP transfer from ATP to D-glycero-beta-D-manno-heptose 1-phosphate, yielding ADP-D-glycero-beta-D-manno-heptose. This is Bifunctional protein HldE from Haemophilus influenzae (strain PittGG).